Reading from the N-terminus, the 284-residue chain is Bifunctional protein FolD (284 aa).

NADP(+) contacts are provided by residues 165-167 (GRS) and serine 190.

It belongs to the tetrahydrofolate dehydrogenase/cyclohydrolase family. In terms of assembly, homodimer.

It catalyses the reaction (6R)-5,10-methylene-5,6,7,8-tetrahydrofolate + NADP(+) = (6R)-5,10-methenyltetrahydrofolate + NADPH. The enzyme catalyses (6R)-5,10-methenyltetrahydrofolate + H2O = (6R)-10-formyltetrahydrofolate + H(+). The protein operates within one-carbon metabolism; tetrahydrofolate interconversion. Catalyzes the oxidation of 5,10-methylenetetrahydrofolate to 5,10-methenyltetrahydrofolate and then the hydrolysis of 5,10-methenyltetrahydrofolate to 10-formyltetrahydrofolate. This chain is Bifunctional protein FolD, found in Streptococcus equi subsp. zooepidemicus (strain H70).